The following is a 460-amino-acid chain: tRNA modification GTPase MnmE (460 aa).

The (6S)-5-formyl-5,6,7,8-tetrahydrofolate site is built by Arg-26, Glu-88, and Arg-127. The 160-residue stretch at 222–381 (GLKVAIVGRP…LESAILSKVQ (160 aa)) folds into the TrmE-type G domain. Asn-232 contributes to the K(+) binding site. GTP contacts are provided by residues 232 to 237 (NVGKSS), 251 to 257 (TELPGTT), and 276 to 279 (DTAG). Residue Ser-236 coordinates Mg(2+). Positions 251, 253, and 256 each coordinate K(+). Thr-257 contributes to the Mg(2+) binding site. Lys-460 provides a ligand contact to (6S)-5-formyl-5,6,7,8-tetrahydrofolate.

It belongs to the TRAFAC class TrmE-Era-EngA-EngB-Septin-like GTPase superfamily. TrmE GTPase family. As to quaternary structure, homodimer. Heterotetramer of two MnmE and two MnmG subunits. K(+) is required as a cofactor.

The protein resides in the cytoplasm. Functionally, exhibits a very high intrinsic GTPase hydrolysis rate. Involved in the addition of a carboxymethylaminomethyl (cmnm) group at the wobble position (U34) of certain tRNAs, forming tRNA-cmnm(5)s(2)U34. The sequence is that of tRNA modification GTPase MnmE from Cyanothece sp. (strain PCC 7425 / ATCC 29141).